A 126-amino-acid chain; its full sequence is Protein ApaG (126 aa).

Residues 2–126 form the ApaG domain; the sequence is DVSQPRIQIQ…FRLAVPNILN (125 aa).

This is Protein ApaG from Vibrio vulnificus (strain CMCP6).